We begin with the raw amino-acid sequence, 149 residues long: Calmodulin-5/6/7/8 (149 aa).

The residue at position 2 (Ala2) is an N-acetylalanine. 4 EF-hand domains span residues 8-43, 44-79, 81-116, and 117-149; these read DQIS…LGQN, PTEA…KMKD, DSEE…LGEK, and LTDE…MMAK. Ca(2+) is bound by residues Asp21, Asp23, Asp25, Cys27, Glu32, Asp57, Asp59, Asn61, Thr63, Glu68, Asp94, Asp96, Asn98, and Glu105. At Lys116 the chain carries N6,N6,N6-trimethyllysine. Positions 130, 132, 134, 136, and 141 each coordinate Ca(2+).

This sequence belongs to the calmodulin family. High expression of PCM5 and 8 in stolon tips and stems, moderate in roots, and low in leaves. Steady-state expression of PCM6 in all the tissues tested, except in the leaves where the expression is lower.

Functionally, calmodulin mediates the control of a large number of enzymes, ion channels and other proteins by Ca(2+). Among the enzymes to be stimulated by the calmodulin-Ca(2+) complex are a number of protein kinases and phosphatases. The chain is Calmodulin-5/6/7/8 (PCM5) from Solanum tuberosum (Potato).